Consider the following 387-residue polypeptide: S-adenosylmethionine synthase (387 aa).

E8 is a binding site for Mg(2+). H14 is a binding site for ATP. Position 42 (E42) interacts with K(+). E55 and Q98 together coordinate L-methionine. ATP contacts are provided by residues 166–168 (DGK), 234–237 (SGRF), D245, 251–252 (RK), A268, K272, and K276. Residue D245 coordinates L-methionine. K276 is a binding site for L-methionine.

Belongs to the AdoMet synthase family. Homotetramer. Mn(2+) is required as a cofactor. Requires Mg(2+) as cofactor. Co(2+) serves as cofactor. It depends on K(+) as a cofactor.

The protein localises to the cytoplasm. The enzyme catalyses L-methionine + ATP + H2O = S-adenosyl-L-methionine + phosphate + diphosphate. Its pathway is amino-acid biosynthesis; S-adenosyl-L-methionine biosynthesis; S-adenosyl-L-methionine from L-methionine: step 1/1. Its function is as follows. Catalyzes the formation of S-adenosylmethionine from methionine and ATP. The reaction comprises two steps that are both catalyzed by the same enzyme: formation of S-adenosylmethionine (AdoMet) and triphosphate, and subsequent hydrolysis of the triphosphate. This chain is S-adenosylmethionine synthase (METK-1), found in Ostreococcus lucimarinus (strain CCE9901).